The chain runs to 381 residues: MNYTLSTVSSATMYNSSSNITTIATTIISTILSTISTNQNNVTTPSTYENTTTISNYTTAYNTTYYSDDYDDYEVSIVDIPHCDDGVDTTSFGLITLYSTIFFLGLFGNIIVLTVLRKYKIKTIQDMFLLNLTLSDLIFVLVFPFNLYDSIAKQWSLGDCLCKFKAMFYFVGFYNSMSFITLMSIDRYLAVVHPVKSMPIRTKRYGIVLSMVVWIVSTIESFPIMLFYETKKVYGITYCHVFYNDNAKIWKLFINFEINIFGMIIPLTILLYCYYKILNTLKTSQTKNKKAIKMVFLIVICSVLFLLPFSVTVFVSSLYLLNVFSGCMALRFVNLAVHVAEIVSLCHCFINPLIYAFCSREFTKKLLRLRTTSSAGSISIG.

At 1-91 (MNYTLSTVSS…HCDDGVDTTS (91 aa)) the chain is on the extracellular side. N-linked (GlcNAc...) asparagine; by host glycosylation is found at Asn2, Asn15, Asn19, Asn41, Asn50, Asn56, and Asn62. The helical transmembrane segment at 92–112 (FGLITLYSTIFFLGLFGNIIV) threads the bilayer. Residues 113-126 (LTVLRKYKIKTIQD) lie on the Cytoplasmic side of the membrane. The helical transmembrane segment at 127 to 147 (MFLLNLTLSDLIFVLVFPFNL) threads the bilayer. Over 148 to 165 (YDSIAKQWSLGDCLCKFK) the chain is Extracellular. Residues 166 to 186 (AMFYFVGFYNSMSFITLMSID) form a helical membrane-spanning segment. At 187–206 (RYLAVVHPVKSMPIRTKRYG) the chain is on the cytoplasmic side. A helical transmembrane segment spans residues 207–227 (IVLSMVVWIVSTIESFPIMLF). The Extracellular portion of the chain corresponds to 228–251 (YETKKVYGITYCHVFYNDNAKIWK). Residues 252 to 272 (LFINFEINIFGMIIPLTILLY) traverse the membrane as a helical segment. The Cytoplasmic portion of the chain corresponds to 273-294 (CYYKILNTLKTSQTKNKKAIKM). The helical transmembrane segment at 295–315 (VFLIVICSVLFLLPFSVTVFV) threads the bilayer. Topologically, residues 316 to 336 (SSLYLLNVFSGCMALRFVNLA) are extracellular. The chain crosses the membrane as a helical span at residues 337–357 (VHVAEIVSLCHCFINPLIYAF). Residues 358-381 (CSREFTKKLLRLRTTSSAGSISIG) lie on the Cytoplasmic side of the membrane.

This sequence belongs to the G-protein coupled receptor 1 family.

The protein localises to the host cell membrane. In terms of biological role, putative chemokine receptor. The sequence is that of G-protein coupled receptor homolog Q2/3L from Ovis aries (Sheep).